Reading from the N-terminus, the 750-residue chain is Polyribonucleotide nucleotidyltransferase (750 aa).

Residues aspartate 523 and aspartate 529 each contribute to the Mg(2+) site. The KH domain occupies 589 to 648 (PRVTSISIPVDKIGEVIGPKGKMINSITEETGAEITIEDDGTIYVGAADGPSAEAAIDKI). The region spanning 660 to 729 (GERFLGTVVK…SRGKISLVVV (70 aa)) is the S1 motif domain.

Belongs to the polyribonucleotide nucleotidyltransferase family. Mg(2+) serves as cofactor.

The protein localises to the cytoplasm. The catalysed reaction is RNA(n+1) + phosphate = RNA(n) + a ribonucleoside 5'-diphosphate. In terms of biological role, involved in mRNA degradation. Catalyzes the phosphorolysis of single-stranded polyribonucleotides processively in the 3'- to 5'-direction. In Saccharopolyspora erythraea (strain ATCC 11635 / DSM 40517 / JCM 4748 / NBRC 13426 / NCIMB 8594 / NRRL 2338), this protein is Polyribonucleotide nucleotidyltransferase.